Here is a 48-residue protein sequence, read N- to C-terminus: MFPSTNQEVLALLPEAYAPFDPIVDVLPIIPLLFLLLAFVWQASVKFR.

The propeptide occupies 1 to 11 (MFPSTNQEVLA). Residues 23 to 43 (IVDVLPIIPLLFLLLAFVWQA) traverse the membrane as a helical segment.

This sequence belongs to the PsbK family. As to quaternary structure, PSII is composed of 1 copy each of membrane proteins PsbA, PsbB, PsbC, PsbD, PsbE, PsbF, PsbH, PsbI, PsbJ, PsbK, PsbL, PsbM, PsbT, PsbY, PsbZ, Psb30/Ycf12, at least 3 peripheral proteins of the oxygen-evolving complex and a large number of cofactors. It forms dimeric complexes.

The protein resides in the plastid. It localises to the chloroplast thylakoid membrane. One of the components of the core complex of photosystem II (PSII). PSII is a light-driven water:plastoquinone oxidoreductase that uses light energy to abstract electrons from H(2)O, generating O(2) and a proton gradient subsequently used for ATP formation. It consists of a core antenna complex that captures photons, and an electron transfer chain that converts photonic excitation into a charge separation. In Euglena sanguinea, this protein is Photosystem II reaction center protein K.